Consider the following 167-residue polypeptide: MNVNEIIKGPILTEKSYQLMSSGVYSFKVSPKTNRSETKKAVEYIFNVKVEKVNIFTVPKKEKKLGKSKGFTTKYKKALVKLMPGYTINLFEDESPQDQKDSETISENTDEKAKIAKKKAELEAKNKEIAEKLAKKQAELAKKESETNENQEKKIENQTENQENSAK.

A large ribosomal subunit protein uL23 region spans residues 1-130 (MNVNEIIKGP…ELEAKNKEIA (130 aa)). 2 disordered regions span residues 91 to 112 (FEDESPQDQKDSETISENTDEK) and 137 to 167 (QAELAKKESETNENQEKKIENQTENQENSAK). Basic and acidic residues-rich tracts occupy residues 97–112 (QDQKDSETISENTDEK) and 137–157 (QAELAKKESETNENQEKKIEN). The tract at residues 131–167 (EKLAKKQAELAKKESETNENQEKKIENQTENQENSAK) is unknown. The segment covering 158–167 (QTENQENSAK) has biased composition (polar residues).

It belongs to the universal ribosomal protein uL23 family. Part of the 50S ribosomal subunit. Contacts protein L29, and trigger factor when it is bound to the ribosome.

Functionally, one of the early assembly proteins it binds 23S rRNA. One of the proteins that surrounds the polypeptide exit tunnel on the outside of the ribosome. Forms the main docking site for trigger factor binding to the ribosome. The chain is Large ribosomal subunit protein uL23 from Mesomycoplasma hyopneumoniae (strain 7448) (Mycoplasma hyopneumoniae).